A 77-amino-acid chain; its full sequence is Small VCP/p97-interacting protein (77 aa).

Residues 1-77 (MGLCFPCPAE…TAGGLRWTVS (77 aa)) form a disordered region. Gly2 carries N-myristoyl glycine lipidation. S-palmitoyl cysteine attachment occurs at residues Cys4 and Cys7. A compositionally biased stretch (basic and acidic residues) spans 18-37 (PEEKREKLAEAAERRQKEAA). The segment at 21 to 33 (KREKLAEAAERRQ) is VCP/p97-interacting motif (VIM). The residue at position 46 (Ser46) is a Phosphoserine.

The protein belongs to the SVIP family. As to quaternary structure, interacts (via VIM motif) with VCP/p97. Forms a complex with VCP/p97 and DERL1. In terms of tissue distribution, highly expressed in the medulla spinalis, adrenal gland, cerebrum, cerebellum, and sciatic nerve.

It is found in the membrane. It localises to the smooth endoplasmic reticulum membrane. Its subcellular location is the golgi apparatus membrane. The protein resides in the cell membrane. The protein localises to the lysosome membrane. Negative regulator of the ER-associated degradation pathway (ERAD) of misfolded proteins. It competes with AMFR/gp78 for binding VCP/p97, and inhibits AMFR/gp78-VCP/p97 complex formation that is required for degradation of ERAD substrates. Involved in the regulation of adrenal cortisol and dehydroepiandrosterone (DHEA) biosynthesis. The polypeptide is Small VCP/p97-interacting protein (Svip) (Mus musculus (Mouse)).